Reading from the N-terminus, the 294-residue chain is Acetylglutamate kinase (294 aa).

Residues 64 to 65 (GG), Arg-86, and Asn-189 contribute to the substrate site.

This sequence belongs to the acetylglutamate kinase family. ArgB subfamily.

The protein resides in the cytoplasm. The catalysed reaction is N-acetyl-L-glutamate + ATP = N-acetyl-L-glutamyl 5-phosphate + ADP. It participates in amino-acid biosynthesis; L-arginine biosynthesis; N(2)-acetyl-L-ornithine from L-glutamate: step 2/4. In terms of biological role, catalyzes the ATP-dependent phosphorylation of N-acetyl-L-glutamate. This chain is Acetylglutamate kinase, found in Carboxydothermus hydrogenoformans (strain ATCC BAA-161 / DSM 6008 / Z-2901).